A 382-amino-acid chain; its full sequence is Layilin (382 aa).

An N-terminal signal peptide occupies residues 1–21; the sequence is MRPGTALQAVLLAVLLVGLRA. Residues 22 to 235 lie on the Extracellular side of the membrane; it reads ATGRLLSASD…SREAALNLAY (214 aa). Positions 45-185 constitute a C-type lectin domain; sequence TQRPCYKVIY…CNMKNNFICK (141 aa). Cystine bridges form between Cys71–Cys184 and Cys150–Cys176. Asn117 carries an N-linked (GlcNAc...) asparagine glycan. Residues 236-256 form a helical membrane-spanning segment; the sequence is ILIPSIPLLLLLVVTTVVCWV. The Cytoplasmic portion of the chain corresponds to 257-382; sequence WICRKRKREQ…GWVENEIYGY (126 aa). The interval 266–285 is disordered; it reads QPDPSTKKQHTIWPSPHQGN. Phosphoserine is present on residues Ser286 and Ser299. The segment at 330–374 is interaction with NF2; that stretch reads DYDNMAVNPSESGFVTLVSVESGFVTNDIYEFSPDQMGRSKESGW. The interval 337–382 is interaction with TLN1; that stretch reads NPSESGFVTLVSVESGFVTNDIYEFSPDQMGRSKESGWVENEIYGY. A run of 5 repeats spans residues 340-344, 350-354, 356-359, 371-375, and 377-380. A 3 X 5 AA repeats of E-S-G-X-V region spans residues 340–375; that stretch reads ESGFVTLVSVESGFVTNDIYEFSPDQMGRSKESGWV. The segment at 356–380 is 2 X 4 AA repeats of N-X-I-Y; that stretch reads NDIYEFSPDQMGRSKESGWVENEIY.

Interacts with NF2, RDX and TLN1.

It localises to the membrane. Its function is as follows. Receptor for hyaluronate. In Homo sapiens (Human), this protein is Layilin (LAYN).